Reading from the N-terminus, the 128-residue chain is MENVPNVYFNPVFIEPTFKHSLLSVYKHRLIVLFEVFIVFILIYVFFRSELNMFFMPKRKIPDPIDRLRRANLACEDDKLMIYGLPWMTTQTSALSINSKPIVYKDCAKLLRSINGSQPVSLNDVLRR.

The Intravirion portion of the chain corresponds to 1–30; it reads MENVPNVYFNPVFIEPTFKHSLLSVYKHRL. A helical; Signal-anchor for type III membrane protein transmembrane segment spans residues 31–51; it reads IVLFEVFIVFILIYVFFRSEL. Over 52–107 the chain is Virion surface; that stretch reads NMFFMPKRKIPDPIDRLRRANLACEDDKLMIYGLPWMTTQTSALSINSKPIVYKDC. A disulfide bridge connects residues cysteine 75 and cysteine 107.

Belongs to the orthopoxvirus OPG099 family. As to quaternary structure, interacts with OPG086. Component of the entry fusion complex (EFC) composed of OPG053, OPG076, OPG086, OPG094, OPG095, OPG099, OPG107, OPG143, OPG104J5, OPG147 and OPG155. Except for OPG095 and OPG053, each of the EFC proteins is required for assembly or stability of the complex. Most cysteines are linked by disulfide bonds. They are created by the viral disulfide bond formation pathway, a poxvirus-specific redox pathway that operates on the cytoplasmic side of the MV membranes. In terms of processing, unglycosylated because produced in viral factories instead of the classic ER -Golgi route.

The protein resides in the virion membrane. Its function is as follows. Component of the entry fusion complex (EFC), which consists of 11 proteins. During cell infection, this complex mediates entry of the virion core into the host cytoplasm by a two-step mechanism consisting of lipid mixing of the viral and cellular membranes and subsequent pore formation. The sequence is that of Entry-fusion complex protein OPG094 (OPG099) from Vaccinia virus (strain Ankara) (VACV).